Reading from the N-terminus, the 247-residue chain is 14-3-3 protein gamma-A (247 aa).

Belongs to the 14-3-3 family. In terms of assembly, homodimer, and heterodimer with other family members.

It localises to the cytoplasm. Its function is as follows. Adapter protein implicated in the regulation of a large spectrum of both general and specialized signaling pathways. Binds to a large number of partners, usually by recognition of a phosphoserine or phosphothreonine motif. Binding generally results in the modulation of the activity of the binding partner. The protein is 14-3-3 protein gamma-A (ywhag-a) of Xenopus laevis (African clawed frog).